A 413-amino-acid polypeptide reads, in one-letter code: Putative competence-damage inducible protein (413 aa).

This sequence belongs to the CinA family.

This is Putative competence-damage inducible protein from Alkaliphilus oremlandii (strain OhILAs) (Clostridium oremlandii (strain OhILAs)).